Here is a 131-residue protein sequence, read N- to C-terminus: Small ribosomal subunit protein uS8 (131 aa).

The protein belongs to the universal ribosomal protein uS8 family. In terms of assembly, part of the 30S ribosomal subunit. Contacts proteins S5 and S12.

Its function is as follows. One of the primary rRNA binding proteins, it binds directly to 16S rRNA central domain where it helps coordinate assembly of the platform of the 30S subunit. The polypeptide is Small ribosomal subunit protein uS8 (Azobacteroides pseudotrichonymphae genomovar. CFP2).